Reading from the N-terminus, the 250-residue chain is Copper homeostasis protein cutC homolog (250 aa).

Belongs to the CutC family.

Functionally, involved in copper homeostasis. Affects body morphology and length, egg laying and brood size. This Caenorhabditis elegans protein is Copper homeostasis protein cutC homolog (cutc-1).